A 263-amino-acid polypeptide reads, in one-letter code: Lens fiber major intrinsic protein (263 aa).

At 1-9 the chain is on the cytoplasmic side; it reads MWEFRSFSF. The chain crosses the membrane as a helical span at residues 10–29; the sequence is WRAVFAEFFGTMFYVFFGLG. At 30-41 the chain is on the extracellular side; that stretch reads ASLKWAAGPANV. A helical transmembrane segment spans residues 42 to 59; it reads LVIALAFGLVLATMVQSI. At 60–61 the chain is on the cytoplasmic side; that stretch reads GH. Residues 62-77 constitute an intramembrane region (discontinuously helical); that stretch reads VSGAHINPAVTFAFLI. Positions 68 to 70 match the NPA 1 motif; it reads NPA. The Cytoplasmic portion of the chain corresponds to 78–82; the sequence is GSQMS. A helical membrane pass occupies residues 83-106; it reads LFRAIFYIAAQLLGAVAGAAVLYG. Topologically, residues 107–127 are extracellular; it reads VTPAAIRGNLALNTLHPGVSL. A helical transmembrane segment spans residues 128–148; it reads GQATTVEIFLTLQFVLCIFAT. Residues 149–156 lie on the Cytoplasmic side of the membrane; the sequence is YDERRNGR. A helical transmembrane segment spans residues 157 to 175; the sequence is LGSVSLAIGFSLTLGHLFG. The Extracellular segment spans residues 176 to 178; that stretch reads LYY. Residues 179–193 constitute an intramembrane region (discontinuously helical); the sequence is TGASMNPARSFAPAV. An NPA 2 motif is present at residues 184-186; the sequence is NPA. The Extracellular segment spans residues 194–200; that stretch reads LTRNFTN. A helical transmembrane segment spans residues 201–222; it reads HWVYWVGPIIGGALGGLVYDFI. Over 223–263 the chain is Cytoplasmic; that stretch reads LFPRMRGLSERLSILKGARPAEPEGQQEATGEPIELKTQSL. Residues 227-237 form an interaction with CALM region; that stretch reads MRGLSERLSIL. The tract at residues 241 to 263 is disordered; it reads RPAEPEGQQEATGEPIELKTQSL.

The protein belongs to the MIP/aquaporin (TC 1.A.8) family. Homotetramer; each monomer provides an independent water pore. Two homotetramers on opposing membranes can dimerize, forming a cell-cell junction. Interacts with CALM; the calcium-calmodulin/CALM complex interacts with the cytoplasmic domains of two aquaporins, leading to channel closure.

The protein resides in the cell membrane. It is found in the cell junction. It carries out the reaction H2O(in) = H2O(out). The water channel activity is inhibited by calcium through calmodulin/CALM. In terms of biological role, aquaporins form homotetrameric transmembrane channels, with each monomer independently mediating water transport across the plasma membrane along its osmotic gradient. Specifically expressed in lens fiber cells, this aquaporin is crucial for maintaining lens water homeostasis and transparency. Beyond water permeability, it also acts as a cell-to-cell adhesion molecule, forming thin junctions between lens fiber cells that are essential for maintaining the ordered structure and transparency of the lens. The chain is Lens fiber major intrinsic protein from Lithobates pipiens (Northern leopard frog).